The sequence spans 439 residues: Enolase 2 (439 aa).

Residues histidine 160 and glutamate 169 each coordinate substrate. Residue glutamate 212 is the Proton donor of the active site. The Mg(2+) site is built by aspartate 247, glutamate 296, and aspartate 323. Substrate is bound by residues glutamate 296 and aspartate 323. The Proton acceptor role is filled by lysine 348. Substrate contacts are provided by residues 375–378 (SHRS) and lysine 399.

It belongs to the enolase family. In terms of assembly, homodimer. Requires Mg(2+) as cofactor.

Its subcellular location is the cytoplasm. It catalyses the reaction (2R)-2-phosphoglycerate = phosphoenolpyruvate + H2O. It participates in carbohydrate degradation; glycolysis; pyruvate from D-glyceraldehyde 3-phosphate: step 4/5. The polypeptide is Enolase 2 (ENO2) (Debaryomyces hansenii (strain ATCC 36239 / CBS 767 / BCRC 21394 / JCM 1990 / NBRC 0083 / IGC 2968) (Yeast)).